Reading from the N-terminus, the 226-residue chain is Phospholipase Culp4 (226 aa).

The first 45 residues, 1–45 (MIPRPQPHSGRWRAGAARRLTSLVAAAFAAATLLLTPALAPPASA), serve as a signal peptide directing secretion. C47 and C117 are disulfide-bonded. S128 (nucleophile) is an active-site residue. The cysteines at positions 191 and 198 are disulfide-linked. Residue D195 is part of the active site. The active-site Proton donor/acceptor is H207.

It belongs to the cutinase family. As to quaternary structure, homodimer.

Its subcellular location is the cell membrane. It is found in the secreted. It localises to the cell wall. The enzyme catalyses 1,2-dihexadecanoyl-sn-glycero-3-phosphocholine + H2O = 1-hexadecanoyl-sn-glycero-3-phosphocholine + hexadecanoate + H(+). It carries out the reaction a butanoate ester + H2O = an aliphatic alcohol + butanoate + H(+). Inhibited by high concentrations of paraoxon. Inhibited by tetrahydrolipstatin (THL), a specific lipase inhibitor. Its function is as follows. A2-type phospholipase, which is probably involved in the degradation of macrophage membrane. Hydrolyzes dipalmitoylphosphatidylcholine. Also shows moderate esterase activity and hydrolyzes the p-nitrophenol-linked aliphatic ester pNP-butyrate (C4). Does not exhibit cutinase activity. This Mycobacterium tuberculosis (strain ATCC 25618 / H37Rv) protein is Phospholipase Culp4.